The primary structure comprises 337 residues: Peptide methionine sulfoxide reductase MsrA/MsrB (337 aa).

Residues 28–181 form a peptide methionine sulfoxide reductase A region; it reads KDIYLAGGCF…PGGYCHVDLS (154 aa). The active site involves cysteine 36. The MsrB domain occupies 198–321; it reads KDELKAKLSD…NGASLKFIPL (124 aa). Cysteine 310 serves as the catalytic Nucleophile.

The protein in the N-terminal section; belongs to the MsrA Met sulfoxide reductase family. In the C-terminal section; belongs to the MsrB Met sulfoxide reductase family.

The catalysed reaction is L-methionyl-[protein] + [thioredoxin]-disulfide + H2O = L-methionyl-(S)-S-oxide-[protein] + [thioredoxin]-dithiol. The enzyme catalyses [thioredoxin]-disulfide + L-methionine + H2O = L-methionine (S)-S-oxide + [thioredoxin]-dithiol. It carries out the reaction L-methionyl-[protein] + [thioredoxin]-disulfide + H2O = L-methionyl-(R)-S-oxide-[protein] + [thioredoxin]-dithiol. Its function is as follows. Has an important function as a repair enzyme for proteins that have been inactivated by oxidation. Catalyzes the reversible oxidation-reduction of methionine sulfoxide in proteins to methionine. In Campylobacter fetus, this protein is Peptide methionine sulfoxide reductase MsrA/MsrB (msrAB).